The chain runs to 297 residues: Adrenocorticotropic hormone receptor (297 aa).

Residues 1-23 (MKHITDLYESVNSTMSNKSDCPP) lie on the Extracellular side of the membrane. N-linked (GlcNAc...) asparagine glycosylation is found at Asn-12 and Asn-17. 2 cysteine pairs are disulfide-bonded: Cys-21-Cys-253 and Cys-245-Cys-251. The helical transmembrane segment at 24 to 49 (VVLPEEVFFTISVIGVLENLIVLLAV) threads the bilayer. Over 50-58 (IKNKNLQSP) the chain is Cytoplasmic. The helical transmembrane segment at 59–79 (MYFFICSLAISDMLGSLYKIL) threads the bilayer. Residues 80 to 104 (ENILIIFRNMGYLEPRGGFESTADD) are Extracellular-facing. The chain crosses the membrane as a helical span at residues 105-126 (VVDSLFILSLLGSICSLSAIAA). Topologically, residues 127–147 (DRYITIFHALQYQRLVTPRRA) are cytoplasmic. A helical transmembrane segment spans residues 148 to 168 (AVVLLIIWACCIGSGITIVTF). Over 169–180 (SHHVPAVIAFTA) the chain is Extracellular. A helical transmembrane segment spans residues 181–199 (LFPLMLVFILCLYGHMFLL). Topologically, residues 200 to 217 (ARSHARRVSTLPRANMKG) are cytoplasmic. The helical transmembrane segment at 218–244 (AITLTVLLGVFIFCWAPFVLHILLMTF) threads the bilayer. The Extracellular segment spans residues 245 to 256 (CPADPYCACYLA). Residues 257 to 278 (LFQVNAVLIMCNAIIDPFIYAF) form a helical membrane-spanning segment. The Cytoplasmic segment spans residues 279-297 (RSPELRDAFKKMIICKRYP). The S-palmitoyl cysteine moiety is linked to residue Cys-293.

Belongs to the G-protein coupled receptor 1 family. As to quaternary structure, homodimer. Interacts with corticotropin (ACTH). Interacts with MRAP; this interaction targets MC2R to the plasma membrane. Interacts with MRAP2; competing with MRAP for binding to MC2R and impairing the binding of corticotropin (ACTH). Post-translationally, ubiquitinated by MGRN1 that may be involved in post-endocytic trafficking and/or degradation of internalized receptor. Expressed in skin and adrenal gland tissues.

It localises to the cell membrane. Functionally, hormone receptor primarily expressed in adrenal cortex that plays a key role in regulating adrenocortical function. Upon corticotropin (ACTH) binding, facilitates the release of adrenal glucocorticoids, including cortisol and corticosterone. In addition, MC2R is required for fetal and neonatal adrenal gland development. Mechanistically, activates adenylate cyclase (cAMP), the MAPK cascade as well as the cAMP-dependent protein kinase A pathway leading to steroidogenic factor 1/NR5A1-mediated transcriptional activation. The protein is Adrenocorticotropic hormone receptor (MC2R) of Sus scrofa (Pig).